The following is a 56-amino-acid chain: Small ribosomal subunit protein uS14 (56 aa).

Zn(2+)-binding residues include C21, C24, C39, and C42.

This sequence belongs to the universal ribosomal protein uS14 family. Component of the 40S small ribosomal subunit. The cofactor is Zn(2+).

The protein localises to the cytoplasm. The protein resides in the cytosol. It localises to the rough endoplasmic reticulum. In Drosophila melanogaster (Fruit fly), this protein is Small ribosomal subunit protein uS14 (RpS29).